Here is a 414-residue protein sequence, read N- to C-terminus: 5-aminolevulinate synthase (414 aa).

3 residues coordinate substrate: R22, S133, and K152. Positions 185, 213, and 241 each coordinate pyridoxal 5'-phosphate. Residue K244 is part of the active site. At K244 the chain carries N6-(pyridoxal phosphate)lysine. Pyridoxal 5'-phosphate-binding residues include T273 and T274. T359 is a binding site for substrate.

It belongs to the class-II pyridoxal-phosphate-dependent aminotransferase family. Homodimer. The cofactor is pyridoxal 5'-phosphate.

The enzyme catalyses succinyl-CoA + glycine + H(+) = 5-aminolevulinate + CO2 + CoA. It participates in porphyrin-containing compound metabolism; protoporphyrin-IX biosynthesis; 5-aminolevulinate from glycine: step 1/1. This is 5-aminolevulinate synthase (hemA) from Rickettsia typhi (strain ATCC VR-144 / Wilmington).